Consider the following 71-residue polypeptide: Protein SlyX homolog (71 aa).

This sequence belongs to the SlyX family.

The sequence is that of Protein SlyX homolog from Thioalkalivibrio sulfidiphilus (strain HL-EbGR7).